A 441-amino-acid chain; its full sequence is NADH-quinone oxidoreductase subunit D 1 (441 aa).

It belongs to the complex I 49 kDa subunit family. As to quaternary structure, NDH-1 is composed of 14 different subunits. Subunits NuoB, C, D, E, F, and G constitute the peripheral sector of the complex.

It localises to the cell membrane. It catalyses the reaction a quinone + NADH + 5 H(+)(in) = a quinol + NAD(+) + 4 H(+)(out). In terms of biological role, NDH-1 shuttles electrons from NADH, via FMN and iron-sulfur (Fe-S) centers, to quinones in the respiratory chain. The immediate electron acceptor for the enzyme in this species is believed to be a menaquinone. Couples the redox reaction to proton translocation (for every two electrons transferred, four hydrogen ions are translocated across the cytoplasmic membrane), and thus conserves the redox energy in a proton gradient. This is NADH-quinone oxidoreductase subunit D 1 from Salinispora arenicola (strain CNS-205).